The following is a 932-amino-acid chain: Protein translocase subunit SecA (932 aa).

Residues Gln-86, 104-108, and Asp-494 each bind ATP; that span reads GEGKT. Residues 857-932 are disordered; sequence EDAGAEAHAS…KPAPKRKKRR (76 aa). Polar residues predominate over residues 905-915; the sequence is TAGSAGDSNLP. The span at 920–932 shows a compositional bias: basic residues; sequence KTNKPAPKRKKRR.

It belongs to the SecA family. As to quaternary structure, monomer and homodimer. Part of the essential Sec protein translocation apparatus which comprises SecA, SecYEG and auxiliary proteins SecDF. Other proteins may also be involved.

It localises to the cell membrane. Its subcellular location is the cytoplasm. The catalysed reaction is ATP + H2O + cellular proteinSide 1 = ADP + phosphate + cellular proteinSide 2.. Part of the Sec protein translocase complex. Interacts with the SecYEG preprotein conducting channel. Has a central role in coupling the hydrolysis of ATP to the transfer of proteins into and across the cell membrane, serving as an ATP-driven molecular motor driving the stepwise translocation of polypeptide chains across the membrane. The sequence is that of Protein translocase subunit SecA from Renibacterium salmoninarum (strain ATCC 33209 / DSM 20767 / JCM 11484 / NBRC 15589 / NCIMB 2235).